A 336-amino-acid polypeptide reads, in one-letter code: Protein-arginine kinase (336 aa).

One can recognise a Phosphagen kinase C-terminal domain in the interval Ile-22–Ile-245. ATP contacts are provided by residues Ser-25–Arg-29, His-83, Arg-116, Arg-167–Met-171, and Arg-198–Glu-203.

This sequence belongs to the ATP:guanido phosphotransferase family.

It carries out the reaction L-arginyl-[protein] + ATP = N(omega)-phospho-L-arginyl-[protein] + ADP + H(+). Catalyzes the specific phosphorylation of arginine residues in proteins. This chain is Protein-arginine kinase, found in Staphylococcus saprophyticus subsp. saprophyticus (strain ATCC 15305 / DSM 20229 / NCIMB 8711 / NCTC 7292 / S-41).